The sequence spans 876 residues: Exosome complex component 10 homolog (876 aa).

The disordered stretch occupies residues 1–22 (MSGEESMPDEEQKQSEEEEEMI). Residues 279–445 (TMIDTKEKLE…YSYDMLREQL (167 aa)) enclose the 3'-5' exonuclease domain. The Mg(2+) site is built by D303, E305, D361, and D430. In terms of domain architecture, HRDC spans 489–569 (NTRQDYALTH…VEARDVKLEK (81 aa)). Basic and acidic residues-rich tracts occupy residues 690-730 (EKQE…EFDA), 741-752 (VPDDPNKPKDPE), and 834-847 (KPVRDNNADFDPFH). The segment at 690-876 (EKQEEEERKE…NRQGTINYKK (187 aa)) is disordered. The span at 848–861 (QKYRLKNKTKKNMA) shows a compositional bias: basic residues.

It belongs to the exosome component 10/RRP6 family. As to quaternary structure, component of the RNA exosome complex. Interacts with crn-5. The cofactor is Mg(2+). As to expression, ubiquitously expressed.

The protein resides in the nucleus. Its subcellular location is the nucleolus. The protein localises to the nucleoplasm. Functionally, catalytic component of the RNA exosome complex which has 3'-&gt;5' exoribonuclease activity and participates in a multitude of cellular RNA processing and degradation events. Involved in apoptotic DNA degradation. Involved in regulation of antisense ribosomal siRNA production. Involved in response to cold-warm shock. In Caenorhabditis elegans, this protein is Exosome complex component 10 homolog.